The primary structure comprises 604 residues: Serine/threonine-protein kinase A-Raf (604 aa).

The 73-residue stretch at 19-91 (GTVKVYLPNK…DGEELIVEVL (73 aa)) folds into the RBD domain. The Phorbol-ester/DAG-type zinc-finger motif lies at 98–144 (MHNFVRKTFFSLAFCDFCLKFLFHGFRCQTCGYKFHQHCSSKVPTVC). Zn(2+) is bound by residues His99, Cys112, Cys115, Cys125, Cys128, His133, Cys136, and Cys144. A phosphoserine mark is found at Ser157 and Ser162. Disordered stretches follow at residues 178 to 222 (ELLT…HMVS) and 241 to 287 (TDAA…DEKK). Phosphothreonine is present on Thr181. Phosphoserine is present on Ser186. Residues 210–222 (IRSTSTPNVHMVS) show a composition bias toward polar residues. Positions 252–265 (PRGSPSPASVSSGR) are enriched in low complexity. Ser255 and Ser267 each carry phosphoserine. Positions 272–287 (LPAEQRERKSLADEKK) are enriched in basic and acidic residues. The Protein kinase domain maps to 308–568 (VQLLKRIGTG…PQILATIELL (261 aa)). ATP contacts are provided by residues 314-322 (IGTGSFGTV) and Lys334. The residue at position 316 (Thr316) is a Phosphothreonine. The Proton acceptor role is filled by Asp427.

The protein belongs to the protein kinase superfamily. TKL Ser/Thr protein kinase family. RAF subfamily. Interacts with TH1L/NELFD. Zn(2+) serves as cofactor. Post-translationally, dephosphorylation by the SHOC2-MRAS-PP1c (SMP) complex consisting of SHOC2, GTP-bound M-Ras/MRAS and the catalytic subunit of protein phosphatase 1 (PPP1CA, PPP1CB or PPP1CC); this relieves inactivation and stimulates kinase activity.

The enzyme catalyses L-seryl-[protein] + ATP = O-phospho-L-seryl-[protein] + ADP + H(+). The catalysed reaction is L-threonyl-[protein] + ATP = O-phospho-L-threonyl-[protein] + ADP + H(+). Its function is as follows. Involved in the transduction of mitogenic signals from the cell membrane to the nucleus. May also regulate the TOR signaling cascade. Phosphorylates PFKFB2. The polypeptide is Serine/threonine-protein kinase A-Raf (Araf) (Rattus norvegicus (Rat)).